The chain runs to 1253 residues: Methionine synthase (1253 aa).

The region spanning glutamine 6–valine 326 is the Hcy-binding domain. Cysteine 248, cysteine 311, and cysteine 312 together coordinate Zn(2+). In terms of domain architecture, Pterin-binding spans phenylalanine 359–glutamate 620. (6S)-5,6,7,8-tetrahydrofolate contacts are provided by residues glycine 370–arginine 372, aspartate 437, asparagine 458, aspartate 525, asparagine 567, arginine 573, and arginine 579. Residues glutamine 650 to arginine 747 enclose the B12-binding N-terminal domain. Methylcob(III)alamin is bound by residues glutamate 697, glycine 770 to aspartate 774, histidine 773, serine 818, threonine 822, and alanine 874. The B12-binding domain maps to glutamine 760 to glutamate 895. Positions serine 911–aspartate 1253 constitute an AdoMet activation domain. Residues aspartate 962, arginine 1160, and tyrosine 1215–phenylalanine 1216 each bind S-adenosyl-L-methionine. Threonine 1252 bears the Phosphothreonine mark.

The protein belongs to the vitamin-B12 dependent methionine synthase family. As to quaternary structure, monomer. Dimer. Forms a multiprotein complex with MMACHC, MMADHC and MTRR. Methylcob(III)alamin is required as a cofactor. The cofactor is Zn(2+).

The protein resides in the cytoplasm. It catalyses the reaction (6S)-5-methyl-5,6,7,8-tetrahydrofolate + L-homocysteine = (6S)-5,6,7,8-tetrahydrofolate + L-methionine. Its pathway is amino-acid biosynthesis; L-methionine biosynthesis via de novo pathway; L-methionine from L-homocysteine (MetH route): step 1/1. Catalyzes the transfer of a methyl group from methylcob(III)alamin (MeCbl) to homocysteine, yielding enzyme-bound cob(I)alamin and methionine in the cytosol. MeCbl is an active form of cobalamin (vitamin B12) used as a cofactor for methionine biosynthesis. Cob(I)alamin form is regenerated to MeCbl by a transfer of a methyl group from 5-methyltetrahydrofolate. The processing of cobalamin in the cytosol occurs in a multiprotein complex composed of at least MMACHC, MMADHC, MTRR (methionine synthase reductase) and MTR which may contribute to shuttle safely and efficiently cobalamin towards MTR in order to produce methionine. This chain is Methionine synthase, found in Mus musculus (Mouse).